We begin with the raw amino-acid sequence, 154 residues long: Myoglobin (154 aa).

The 147-residue stretch at Gly-2–Lys-148 folds into the Globin domain. Phosphoserine is present on Ser-4. His-65 is a nitrite binding site. His-65 contributes to the O2 binding site. The residue at position 68 (Thr-68) is a Phosphothreonine. Residue His-94 coordinates heme b.

This sequence belongs to the globin family. In terms of assembly, monomeric.

The protein resides in the cytoplasm. The protein localises to the sarcoplasm. The catalysed reaction is Fe(III)-heme b-[protein] + nitric oxide + H2O = Fe(II)-heme b-[protein] + nitrite + 2 H(+). It carries out the reaction H2O2 + AH2 = A + 2 H2O. Its function is as follows. Monomeric heme protein which primary function is to store oxygen and facilitate its diffusion within muscle tissues. Reversibly binds oxygen through a pentacoordinated heme iron and enables its timely and efficient release as needed during periods of heightened demand. Depending on the oxidative conditions of tissues and cells, and in addition to its ability to bind oxygen, it also has a nitrite reductase activity whereby it regulates the production of bioactive nitric oxide. Under stress conditions, like hypoxia and anoxia, it also protects cells against reactive oxygen species thanks to its pseudoperoxidase activity. The protein is Myoglobin (MB) of Sus scrofa (Pig).